Reading from the N-terminus, the 67-residue chain is Bowman-Birk type proteinase inhibitor 1 (67 aa).

7 disulfide bridges follow: C5-C59, C6-C21, C9-C55, C11-C19, C29-C36, C33-C48, and C38-C46.

This sequence belongs to the Bowman-Birk serine protease inhibitor family. As to quaternary structure, monomer. Although dimerization may occur in solution. Seed.

In terms of biological role, inhibits trypsin but not chymotrypsin. The inhibitor consists of 2 domains and has 2 sites of interaction with trypsin. This chain is Bowman-Birk type proteinase inhibitor 1, found in Dioclea glabra.